Reading from the N-terminus, the 265-residue chain is Probable esterase tazC (265 aa).

Active-site charge relay system residues include serine 119, aspartate 209, and histidine 236.

The protein belongs to the LovG family.

It functions in the pathway secondary metabolite biosynthesis. Functionally, probable esterase; part of the gene cluster that mediates the biosynthesis of azaterrilone A and other azaphilones, a class of fungal metabolites characterized by a highly oxygenated pyrano-quinone bicyclic core and exhibiting a broad range of bioactivities. The first step of the pathway begins with the non-reducing polyketide synthase tazA that assembles one acetyl-CoA starter unit, five malonyl-CoA units, and catalyzes a series of Claisen condensations, methylation, PT-mediated cyclization, and finally releases the first hexaketide precursor through the R-domain. The tazA product then undergoes reduction on its terminal ketone and the following pyran-ring formation by yet undetermined enzyme(s). Dehydration and enoyl reduction, possibly involving the trans-enoyl reductase tazE leads to the next intermediate. TazD is predicted as an acetyltransferase and might catalyze the acetylation steps leading to the synthesis of azaterrilone A. Azaterrilone A is not the final product of the taz pathway and both the highly reducing polyketide synthase tazB and the dual enzyme tazHJ catalyze late steps of the pathway, leading to the production of the 2 final stereoisomers that contain additional polyketide modification whose structures have still to be determined. The polypeptide is Probable esterase tazC (Aspergillus terreus (strain NIH 2624 / FGSC A1156)).